Reading from the N-terminus, the 243-residue chain is Orotidine 5'-phosphate decarboxylase (243 aa).

Residues aspartate 19, lysine 41, aspartate 69 to threonine 78, threonine 124, arginine 185, glutamine 194, glycine 214, and arginine 215 each bind substrate. Lysine 71 serves as the catalytic Proton donor.

Belongs to the OMP decarboxylase family. Type 1 subfamily. As to quaternary structure, homodimer.

The enzyme catalyses orotidine 5'-phosphate + H(+) = UMP + CO2. It functions in the pathway pyrimidine metabolism; UMP biosynthesis via de novo pathway; UMP from orotate: step 2/2. In terms of biological role, catalyzes the decarboxylation of orotidine 5'-monophosphate (OMP) to uridine 5'-monophosphate (UMP). The polypeptide is Orotidine 5'-phosphate decarboxylase (Xanthomonas campestris pv. campestris (strain B100)).